Here is a 95-residue protein sequence, read N- to C-terminus: Aspartyl/glutamyl-tRNA(Asn/Gln) amidotransferase subunit C (95 aa).

Belongs to the GatC family. In terms of assembly, heterotrimer of A, B and C subunits.

The enzyme catalyses L-glutamyl-tRNA(Gln) + L-glutamine + ATP + H2O = L-glutaminyl-tRNA(Gln) + L-glutamate + ADP + phosphate + H(+). It catalyses the reaction L-aspartyl-tRNA(Asn) + L-glutamine + ATP + H2O = L-asparaginyl-tRNA(Asn) + L-glutamate + ADP + phosphate + 2 H(+). In terms of biological role, allows the formation of correctly charged Asn-tRNA(Asn) or Gln-tRNA(Gln) through the transamidation of misacylated Asp-tRNA(Asn) or Glu-tRNA(Gln) in organisms which lack either or both of asparaginyl-tRNA or glutaminyl-tRNA synthetases. The reaction takes place in the presence of glutamine and ATP through an activated phospho-Asp-tRNA(Asn) or phospho-Glu-tRNA(Gln). The chain is Aspartyl/glutamyl-tRNA(Asn/Gln) amidotransferase subunit C from Rhizobium etli (strain ATCC 51251 / DSM 11541 / JCM 21823 / NBRC 15573 / CFN 42).